The following is a 484-amino-acid chain: Bifunctional protein HldE (484 aa).

Positions Met-1 to Ala-320 are ribokinase. Asn-195–Glu-198 is an ATP binding site. The active site involves Asp-265. A cytidylyltransferase region spans residues Phe-349 to Arg-484.

In the N-terminal section; belongs to the carbohydrate kinase PfkB family. The protein in the C-terminal section; belongs to the cytidylyltransferase family. In terms of assembly, homodimer.

The catalysed reaction is D-glycero-beta-D-manno-heptose 7-phosphate + ATP = D-glycero-beta-D-manno-heptose 1,7-bisphosphate + ADP + H(+). It carries out the reaction D-glycero-beta-D-manno-heptose 1-phosphate + ATP + H(+) = ADP-D-glycero-beta-D-manno-heptose + diphosphate. The protein operates within nucleotide-sugar biosynthesis; ADP-L-glycero-beta-D-manno-heptose biosynthesis; ADP-L-glycero-beta-D-manno-heptose from D-glycero-beta-D-manno-heptose 7-phosphate: step 1/4. It functions in the pathway nucleotide-sugar biosynthesis; ADP-L-glycero-beta-D-manno-heptose biosynthesis; ADP-L-glycero-beta-D-manno-heptose from D-glycero-beta-D-manno-heptose 7-phosphate: step 3/4. Functionally, catalyzes the phosphorylation of D-glycero-D-manno-heptose 7-phosphate at the C-1 position to selectively form D-glycero-beta-D-manno-heptose-1,7-bisphosphate. In terms of biological role, catalyzes the ADP transfer from ATP to D-glycero-beta-D-manno-heptose 1-phosphate, yielding ADP-D-glycero-beta-D-manno-heptose. The sequence is that of Bifunctional protein HldE from Gluconacetobacter diazotrophicus (strain ATCC 49037 / DSM 5601 / CCUG 37298 / CIP 103539 / LMG 7603 / PAl5).